We begin with the raw amino-acid sequence, 659 residues long: RNA-binding E3 ubiquitin-protein ligase MEX3C (659 aa).

Positions 1-15 (MPSGSSAALALAAAP) are enriched in low complexity. A disordered region spans residues 1 to 140 (MPSGSSAALA…EEAEEEDRSS (140 aa)). Residues 16 to 37 (APLPQPPPPPPPPPPPLPPPSG) show a composition bias toward pro residues. The span at 64–82 (EPGAPALRAPAAAAQGQAR) shows a compositional bias: low complexity. Positions 83–94 (RAAELSPEERAP) are enriched in basic and acidic residues. S88 carries the phosphoserine modification. A compositionally biased stretch (acidic residues) spans 104 to 137 (AELELEEDEEEGEEAELDGDLLEEEELEEAEEED). KH domains lie at 232–293 (TTEC…KREI) and 326–387 (QTTV…REEI). The interval 513–569 (FEPVNPLSGFGSDPSGNMKTQRRGSQPSTPRLSPTFPESIEHPLARRVRSDPPSTGN) is disordered. Over residues 526–544 (PSGNMKTQRRGSQPSTPRL) the composition is skewed to polar residues. Phosphoserine is present on residues S537 and S545. Residues 551–562 (SIEHPLARRVRS) are compositionally biased toward basic and acidic residues. The segment at 608 to 648 (CVICFENEVIAALVPCGHNLFCMECANKICEKRTPSCPVCQ) adopts an RING-type zinc-finger fold.

In terms of assembly, interacts with USP7, which antagonizes the ability to degrade mRNA. In terms of tissue distribution, highest levels found in fetal brain and testis. Also expressed in thymus, salivary gland and uterus. Highly expressed in cells of the innate immune system, in particular activated NK cells. Week expression in the intestine.

The protein resides in the cytoplasm. The protein localises to the nucleus. It carries out the reaction S-ubiquitinyl-[E2 ubiquitin-conjugating enzyme]-L-cysteine + [acceptor protein]-L-lysine = [E2 ubiquitin-conjugating enzyme]-L-cysteine + N(6)-ubiquitinyl-[acceptor protein]-L-lysine.. Functionally, E3 ubiquitin ligase responsible for the post-transcriptional regulation of common HLA-A allotypes. Binds to the 3' UTR of HLA-A2 mRNA, and regulates its levels by promoting mRNA decay. RNA binding is sufficient to prevent translation, but ubiquitin ligase activity is required for mRNA degradation. This chain is RNA-binding E3 ubiquitin-protein ligase MEX3C (MEX3C), found in Homo sapiens (Human).